Here is a 320-residue protein sequence, read N- to C-terminus: V-set and transmembrane domain-containing protein 4 (320 aa).

An N-terminal signal peptide occupies residues M1–A23. Residues L24–S155 enclose the Ig-like domain. Topologically, residues L24 to Y180 are extracellular. N-linked (GlcNAc...) asparagine glycosylation is found at N25, N41, N89, and N144. C46 and C127 are disulfide-bonded. Residues A181–W201 traverse the membrane as a helical segment. The Cytoplasmic segment spans residues Q202 to L320.

Proteolytically cleaved to generate a bioactive peptide.

The protein resides in the secreted. The protein localises to the cell membrane. In terms of biological role, peptide Lv enhances L-type voltage-gated calcium channel (L-VGCC) currents in retinal photoreceptors. The polypeptide is V-set and transmembrane domain-containing protein 4 (VSTM4) (Homo sapiens (Human)).